A 22-amino-acid polypeptide reads, in one-letter code: GEEERKAMAELEAKKAQEALKA.

The tract at residues Gly1 to Ala22 is disordered. A 4-carboxyglutamate mark is found at Glu3, Glu4, Glu10, and Glu18.

Expressed by the venom duct.

The protein resides in the secreted. Conantokins inhibit N-methyl-D-aspartate (NMDA) receptors. In Conus ochroleucus (Perfect cone), this protein is Conantokin-Oc.